Here is a 696-residue protein sequence, read N- to C-terminus: MNKIRKTFQYGKHEVTFETGEMARQATGAVVVRMGDTVLLVSVVAKKEAEEGRDFFPLTVNYQEKTYAAGKIPGGYFKREGRPTEKETLTSRLIDRPLRPLFPKGFTNEVQVIATVLSVDSKVPTDIPAILGASAAIGLSGIPFNGSLGAARVGYRGGEYLLNPSLDELKDSALDLVVAGTRDAVLMVESEAQELPESVMLGAVLHGHQAMQVAIQAIAEFIQEAGGAKWEWEPPTVNTALEKWVVEKSEAPLKKAYQIQEKTARQAQIQAIRDQLLADRAAEREGEENAVNEHELAVIFHELERRIVREQILTGQPRIDGRDTKTVRPITVKVGVLPRSHGSALFTRGETQALVVTTLGTERDAQSIDDLDGDRQEEFIFHYNFPPFCVGEVGFMSGPKRREIGHGRLAKRAVVPVVPTLDKFPYVIRVVSEILESNGSSSMASVCGSSLALMDAGVPTKAPVAGIAMGLIKENDKYAVLSDILGDEDHLGDMDFKVAGTSNGVTALQMDIKIEGITKEIMEQALDQAKEGRLHILSIMNKVLDKPRSQVSDLAPQYVTMKINPEKIRDVIGKGGVVIREITEATNCAIDISDDGTIKIAAHTTEEGEAAKRRIEELTAEVELGKVYEGTVVKITDFGAFVQILPNTQGLVHISQIAQERVENVRDYLEEGQVIRVKVIEIDRQGRVRLSMKQID.

Mg(2+) is bound by residues Asp-489 and Asp-495. Positions 556-615 (PQYVTMKINPEKIRDVIGKGGVVIREITEATNCAIDISDDGTIKIAAHTTEEGEAAKRRI) constitute a KH domain. An S1 motif domain is found at 625–693 (GKVYEGTVVK…RQGRVRLSMK (69 aa)).

The protein belongs to the polyribonucleotide nucleotidyltransferase family. As to quaternary structure, component of the RNA degradosome, which is a multiprotein complex involved in RNA processing and mRNA degradation. The cofactor is Mg(2+).

It localises to the cytoplasm. The catalysed reaction is RNA(n+1) + phosphate = RNA(n) + a ribonucleoside 5'-diphosphate. In terms of biological role, involved in mRNA degradation. Catalyzes the phosphorolysis of single-stranded polyribonucleotides processively in the 3'- to 5'-direction. This is Polyribonucleotide nucleotidyltransferase from Coxiella burnetii (strain RSA 331 / Henzerling II).